We begin with the raw amino-acid sequence, 158 residues long: Crossover junction endodeoxyribonuclease RuvC (158 aa).

Residues D7, E67, and D139 contribute to the active site. The Mg(2+) site is built by D7, E67, and D139.

The protein belongs to the RuvC family. Homodimer which binds Holliday junction (HJ) DNA. The HJ becomes 2-fold symmetrical on binding to RuvC with unstacked arms; it has a different conformation from HJ DNA in complex with RuvA. In the full resolvosome a probable DNA-RuvA(4)-RuvB(12)-RuvC(2) complex forms which resolves the HJ. Mg(2+) is required as a cofactor.

The protein resides in the cytoplasm. It carries out the reaction Endonucleolytic cleavage at a junction such as a reciprocal single-stranded crossover between two homologous DNA duplexes (Holliday junction).. Its function is as follows. The RuvA-RuvB-RuvC complex processes Holliday junction (HJ) DNA during genetic recombination and DNA repair. Endonuclease that resolves HJ intermediates. Cleaves cruciform DNA by making single-stranded nicks across the HJ at symmetrical positions within the homologous arms, yielding a 5'-phosphate and a 3'-hydroxyl group; requires a central core of homology in the junction. The consensus cleavage sequence is 5'-(A/T)TT(C/G)-3'. Cleavage occurs on the 3'-side of the TT dinucleotide at the point of strand exchange. HJ branch migration catalyzed by RuvA-RuvB allows RuvC to scan DNA until it finds its consensus sequence, where it cleaves and resolves the cruciform DNA. The protein is Crossover junction endodeoxyribonuclease RuvC of Prochlorococcus marinus (strain MIT 9211).